The chain runs to 387 residues: F420-dependent formate dehydrogenase 1 subunit beta (387 aa).

2 4Fe-4S ferredoxin-type domains span residues 275 to 298 (TIEE…VCPV) and 326 to 355 (VRMS…ARIF). [4Fe-4S] cluster contacts are provided by cysteine 286, cysteine 289, cysteine 292, cysteine 296, cysteine 335, cysteine 338, cysteine 341, and cysteine 345. Residues 366-387 (LGYRPGVDDEAPPALGGSCPTQ) form a disordered region.

The protein belongs to the FrhB family. In terms of assembly, dimer of an alpha (FdhA1) and a beta (FdhB1) subunit. The cofactor is [4Fe-4S] cluster. FAD serves as cofactor. It depends on Zn(2+) as a cofactor.

The enzyme catalyses oxidized coenzyme F420-(gamma-L-Glu)(n) + formate + 2 H(+) = reduced coenzyme F420-(gamma-L-Glu)(n) + CO2. In terms of biological role, catalyzes the oxidation of formate to carbon dioxide, with coenzyme F420 as the electron acceptor. In vitro can also use methyl viologen as electron acceptor. The polypeptide is F420-dependent formate dehydrogenase 1 subunit beta (Methanococcus maripaludis (strain DSM 14266 / JCM 13030 / NBRC 101832 / S2 / LL)).